The primary structure comprises 156 residues: ATP synthase subunit b (156 aa).

Residues 12 to 32 (VAFLIFVLFCMKYVWPPVITA) form a helical membrane-spanning segment.

Belongs to the ATPase B chain family. F-type ATPases have 2 components, F(1) - the catalytic core - and F(0) - the membrane proton channel. F(1) has five subunits: alpha(3), beta(3), gamma(1), delta(1), epsilon(1). F(0) has three main subunits: a(1), b(2) and c(10-14). The alpha and beta chains form an alternating ring which encloses part of the gamma chain. F(1) is attached to F(0) by a central stalk formed by the gamma and epsilon chains, while a peripheral stalk is formed by the delta and b chains.

The protein localises to the cell inner membrane. Functionally, f(1)F(0) ATP synthase produces ATP from ADP in the presence of a proton or sodium gradient. F-type ATPases consist of two structural domains, F(1) containing the extramembraneous catalytic core and F(0) containing the membrane proton channel, linked together by a central stalk and a peripheral stalk. During catalysis, ATP synthesis in the catalytic domain of F(1) is coupled via a rotary mechanism of the central stalk subunits to proton translocation. Its function is as follows. Component of the F(0) channel, it forms part of the peripheral stalk, linking F(1) to F(0). This is ATP synthase subunit b from Pseudomonas putida (strain GB-1).